A 285-amino-acid polypeptide reads, in one-letter code: Chalcone synthase 6-4 (285 aa).

Residue Cys-60 is part of the active site.

This sequence belongs to the thiolase-like superfamily. Chalcone/stilbene synthases family.

It catalyses the reaction (E)-4-coumaroyl-CoA + 3 malonyl-CoA + 3 H(+) = 2',4,4',6'-tetrahydroxychalcone + 3 CO2 + 4 CoA. The protein operates within secondary metabolite biosynthesis; flavonoid biosynthesis. The primary product of this enzyme is 4,2',4',6'-tetrahydroxychalcone (also termed naringenin-chalcone or chalcone) which can under specific conditions spontaneously isomerize into naringenin. The chain is Chalcone synthase 6-4 (CHS6-4) from Medicago sativa (Alfalfa).